Consider the following 104-residue polypeptide: L-rhamnose mutarotase (104 aa).

Tyrosine 18 contributes to the substrate binding site. Histidine 22 serves as the catalytic Proton donor. Substrate-binding positions include tyrosine 41 and 76-77 (WW).

This sequence belongs to the rhamnose mutarotase family. In terms of assembly, homodimer.

It is found in the cytoplasm. The enzyme catalyses alpha-L-rhamnose = beta-L-rhamnose. It functions in the pathway carbohydrate metabolism; L-rhamnose metabolism. Functionally, involved in the anomeric conversion of L-rhamnose. The sequence is that of L-rhamnose mutarotase from Burkholderia ambifaria (strain ATCC BAA-244 / DSM 16087 / CCUG 44356 / LMG 19182 / AMMD) (Burkholderia cepacia (strain AMMD)).